The following is a 997-amino-acid chain: MSSNTVAQFATELKMPANVLLEQLRAAGVDLKSVDDAVTDSDKAKLLESLRRAHGATEGKKITLTRRQTSEIRQADATGRSRTIQVEVRKKRVFVKRDPAELAAEQAAARAEEAAAEAVPAEAAPAPAEPVRAEPAVETAAKPVEPPVAEAPAEPVAAPAAEPQSEQPAQAEAQPEPTPAAQAEPEPQPEPQPEAAPAQAVAEPVEPAKNVSVTETEAEQARPEPVVHAQTELTSKTPAPVAQPSAPAESPKSAKAEPAAAPKTTAKPGEIRRAAAPAAPDRAREEARRAAEAEAAALREMLSRPRKVLRAPEPEPQAGALSGTLHKPAGKPATTAAPKKDAKPGAPGAKKTIKTAEVSSTWSDDSARKKPADNKPAVTTRDGWRAGGKGGRGGRNSRNQHQDRRHEQVQQEFIAREIHVPETISVADLAHKMSVKAAEVIKQLMKLGQMVTINQVLDQETAMIVVQEFGHMAIAAKLDDPEAFLDETAAVTEAEAEPRAPVVTVMGHVDHGKTSLLDYIRRAKVASGEAGGITQHIGAYHVETGRGVVTFLDTPGHEAFTAMRARGAKATDIVILVVAADDGVMPQTREAIHHAKAGGVPLVVAVNKIDKPEANPERVKQELVAEEVVPEEYGGDVPFVPVSAKTGAGIDDLLENVLLQAEILELKAPIEAPAKGLVIEARLDKGRGPVATILVQSGTLKRGDVVLAGASFGRVRAMLDENGKQIQTAGPSIPVEIQGLTEVPAAGDELMVLSDERKAREIALFRQGKFRDVKLARQQAAKLESMFDNLGEGTQTLALIVKTDVQGSQEALVSSLTKLSTDEVRVQVVHAAVGGISESDVNLAIASNAVVIGFNVRAEQSAKKLAETNGIDLRYYNIIYDAVDEVKAAMSGMLAPEKREEVIGLVEVREVYTISRIGTVAGCMVLDGVVRRDSQVRLLRNNVVQWTGHLDSLRRFKDDVKEVKSGFDCGLTLRGNNDLQLGDQLEVFEIKEIARTL.

The disordered stretch occupies residues 101 to 409 (ELAAEQAAAR…QHQDRRHEQV (309 aa)). Composition is skewed to low complexity over residues 116–185 (AEAV…QAEP), 195–208 (AAPAQAVAEPVEPA), and 244–280 (PSAPAESPKSAKAEPAAAPKTTAKPGEIRRAAAPAAP). A compositionally biased stretch (basic and acidic residues) spans 281-292 (DRAREEARRAAE). Positions 385-394 (RAGGKGGRGG) are enriched in gly residues. A compositionally biased stretch (basic and acidic residues) spans 400–409 (QHQDRRHEQV). The tr-type G domain maps to 498–665 (PRAPVVTVMG…NVLLQAEILE (168 aa)). Residues 507–514 (GHVDHGKT) form a G1 region. 507–514 (GHVDHGKT) contributes to the GTP binding site. The tract at residues 532–536 (GITQH) is G2. The tract at residues 553-556 (DTPG) is G3. GTP contacts are provided by residues 553-557 (DTPGH) and 607-610 (NKID). The tract at residues 607–610 (NKID) is G4. A G5 region spans residues 643–645 (SAK).

It belongs to the TRAFAC class translation factor GTPase superfamily. Classic translation factor GTPase family. IF-2 subfamily.

Its subcellular location is the cytoplasm. Its function is as follows. One of the essential components for the initiation of protein synthesis. Protects formylmethionyl-tRNA from spontaneous hydrolysis and promotes its binding to the 30S ribosomal subunits. Also involved in the hydrolysis of GTP during the formation of the 70S ribosomal complex. The sequence is that of Translation initiation factor IF-2 from Bordetella bronchiseptica (strain ATCC BAA-588 / NCTC 13252 / RB50) (Alcaligenes bronchisepticus).